A 344-amino-acid polypeptide reads, in one-letter code: D-arabinose dehydrogenase [NAD(P)+] heavy chain (344 aa).

Tyrosine 71 serves as the catalytic Proton donor. Residue histidine 131 coordinates substrate. A Phosphothreonine modification is found at threonine 151. 241 to 295 (SPLGSHGAPNLKIPLVKKLAEKYNVTGNDLLISYHIRQGTIVIPRSLNPVRISSS) lines the NADP(+) pocket.

It belongs to the aldo/keto reductase family. Heterodimer of a heavy chain and a light chain.

It is found in the cytoplasm. It catalyses the reaction D-arabinose + NADP(+) = D-arabinono-1,4-lactone + NADPH + H(+). The enzyme catalyses D-arabinose + NAD(+) = D-arabinono-1,4-lactone + NADH + H(+). Its function is as follows. Catalyzes the oxidation of D-arabinose, L-xylose, L-fucose and L-galactose in the presence of NADP(+). The protein is D-arabinose dehydrogenase [NAD(P)+] heavy chain (ARA1) of Saccharomyces cerevisiae (strain ATCC 204508 / S288c) (Baker's yeast).